Here is a 109-residue protein sequence, read N- to C-terminus: UPF0122 protein CLL_A1244 (109 aa).

The protein belongs to the UPF0122 family.

Its function is as follows. Might take part in the signal recognition particle (SRP) pathway. This is inferred from the conservation of its genetic proximity to ftsY/ffh. May be a regulatory protein. The polypeptide is UPF0122 protein CLL_A1244 (Clostridium botulinum (strain Eklund 17B / Type B)).